A 33-amino-acid chain; its full sequence is MNIELIVQLTSLALITLAGPLIVALLFLKQGNL.

The chain crosses the membrane as a helical span at residues 5–25 (LIVQLTSLALITLAGPLIVAL).

This sequence belongs to the Psb30/Ycf12 family. In terms of assembly, PSII is composed of 1 copy each of membrane proteins PsbA, PsbB, PsbC, PsbD, PsbE, PsbF, PsbH, PsbI, PsbJ, PsbK, PsbL, PsbM, PsbT, PsbY, PsbZ, Psb30/Ycf12, peripheral proteins of the oxygen-evolving complex and a large number of cofactors. It forms dimeric complexes.

The protein localises to the plastid. Its subcellular location is the chloroplast thylakoid membrane. Functionally, a core subunit of photosystem II (PSII), probably helps stabilize the reaction center. This Euglena sanguinea protein is Photosystem II reaction center protein Psb30.